The sequence spans 655 residues: Putative sensor protein Sfri_3689 (655 aa).

The signal sequence occupies residues 1–17; the sequence is MKTLLLLLIIITMPVLA. A helical transmembrane segment spans residues 252–272; sequence FALAILVAIMSAIGMIFTGFI. The Histidine kinase domain maps to 419–653; the sequence is GIAHEINNPT…QIRLIFALAQ (235 aa). At His422 the chain carries Phosphohistidine; by autocatalysis.

The protein localises to the cell membrane. It carries out the reaction ATP + protein L-histidine = ADP + protein N-phospho-L-histidine.. This Shewanella frigidimarina (strain NCIMB 400) protein is Putative sensor protein Sfri_3689.